We begin with the raw amino-acid sequence, 435 residues long: Sulfopropanediol 3-dehydrogenase (435 aa).

3 residues coordinate NAD(+): tyrosine 119, glutamine 181, and asparagine 204. The Zn(2+) site is built by glutamine 249 and histidine 252. Catalysis depends on proton acceptor residues glutamate 319 and histidine 320. Positions 353 and 412 each coordinate Zn(2+).

Belongs to the histidinol dehydrogenase family. HpsN subfamily. Requires Zn(2+) as cofactor.

It carries out the reaction (2R)-3-sulfopropanediol + 2 NAD(+) + H2O = (2R)-3-sulfolactate + 2 NADH + 3 H(+). In terms of biological role, catalyzes the NAD-dependent oxidation of (R)-2,3-dihydroxypropane-1-sulfonate to (R)-3-sulfolactate. This chain is Sulfopropanediol 3-dehydrogenase, found in Ruegeria pomeroyi (strain ATCC 700808 / DSM 15171 / DSS-3) (Silicibacter pomeroyi).